The chain runs to 561 residues: DNA ligase (561 aa).

Residue Glu249 coordinates ATP. Lys251 serves as the catalytic N6-AMP-lysine intermediate. ATP-binding residues include Arg256, Arg271, Glu301, Phe340, Arg417, and Lys423.

The protein belongs to the ATP-dependent DNA ligase family. The cofactor is Mg(2+).

The enzyme catalyses ATP + (deoxyribonucleotide)n-3'-hydroxyl + 5'-phospho-(deoxyribonucleotide)m = (deoxyribonucleotide)n+m + AMP + diphosphate.. In terms of biological role, DNA ligase that seals nicks in double-stranded DNA during DNA replication, DNA recombination and DNA repair. The polypeptide is DNA ligase (Methanothermobacter thermautotrophicus (strain ATCC 29096 / DSM 1053 / JCM 10044 / NBRC 100330 / Delta H) (Methanobacterium thermoautotrophicum)).